Consider the following 127-residue polypeptide: Large ribosomal subunit protein bL20 (127 aa).

This sequence belongs to the bacterial ribosomal protein bL20 family.

Functionally, binds directly to 23S ribosomal RNA and is necessary for the in vitro assembly process of the 50S ribosomal subunit. It is not involved in the protein synthesizing functions of that subunit. The sequence is that of Large ribosomal subunit protein bL20 from Bifidobacterium longum (strain NCC 2705).